The sequence spans 670 residues: Sodium/potassium/calcium exchanger 2 (670 aa).

Topologically, residues 1–38 are cytoplasmic; that stretch reads MDLHQSATVRLLQEWCSHESPSGCRRHYNTRKKLKLIR. The chain crosses the membrane as a helical span at residues 39–59; sequence VIGLVMGLVAVSTVPFSISAF. At 60-133 the chain is on the extracellular side; it reads TETYSQNNRG…DVFSLEERRK (74 aa). Disordered regions lie at residues 67-86 and 91-122; these read NRGEASDVTGPRAAPGHRQR and LNDKIRDYTPQPPASQEDRSENGTDHAQGDYP. Over residues 106-122 the composition is skewed to basic and acidic residues; the sequence is QEDRSENGTDHAQGDYP. Residue N112 is glycosylated (N-linked (GlcNAc...) asparagine). A helical transmembrane segment spans residues 134-154; the sequence is GAIILHVIGMIYMFIALAIVC. Topologically, residues 155-179 are cytoplasmic; it reads DEFFVPSLTVITEKLGISDDVAGAT. One copy of the Alpha-1 repeat lies at 175 to 215; that stretch reads VAGATFMAAGGSAPELFTSLIGVFIAHSNVGIGTIVGSAVF. The chain crosses the membrane as a helical span at residues 180-200; sequence FMAAGGSAPELFTSLIGVFIA. The Extracellular segment spans residues 201-205; it reads HSNVG. The helical transmembrane segment at 206 to 226 threads the bilayer; that stretch reads IGTIVGSAVFNILFVIGMCAL. The Cytoplasmic segment spans residues 227–244; that stretch reads FSREILNLTWWPLFRDVS. Residues 245–265 form a helical membrane-spanning segment; the sequence is FYIVDLIMLIIFFLDNVIMWW. A topological domain (extracellular) is located at residue E266. Residues 267-287 form a helical membrane-spanning segment; the sequence is SLLLLTAYFAYVVFMKFNVQV. At 288 to 506 the chain is on the cytoplasmic side; it reads ERWVKQMINR…PDVRKPASKK (219 aa). Positions 312–335 are disordered; the sequence is ASTAGDKEEPTLPNKPRLQRGGSS. S337 and S341 each carry phosphoserine. 2 disordered regions span residues 394 to 414 and 450 to 471; these read KCQVDENERQNGAANHVDYAA and AADAPQATETAEEDDDQPLSLS. The chain crosses the membrane as a helical span at residues 507–527; sequence FFPITFFGSITWIAVFSYLMV. Over 528–542 the chain is Extracellular; it reads WWAHQVGETIGISEE. A helical membrane pass occupies residues 543–563; it reads IMGLTILAAGTSIPDLITSVI. One copy of the Alpha-2 repeat lies at 550–581; sequence AAGTSIPDLITSVIVARKGLGDMAVSSSVGSN. Over 564-578 the chain is Cytoplasmic; that stretch reads VARKGLGDMAVSSSV. The helical transmembrane segment at 579–599 threads the bilayer; the sequence is GSNIFDITVGLPLPWLLYTII. At 600–611 the chain is on the extracellular side; that stretch reads HRFKPVTVSSNG. Residues 612 to 632 form a helical membrane-spanning segment; that stretch reads LFCAIVLLFIMLIFVILSIAL. Over 633 to 639 the chain is Cytoplasmic; it reads CKWRMNK. A helical membrane pass occupies residues 640-660; the sequence is ILGFIMFGLYFAFLVVSVLLE. Residues 661-670 are Extracellular-facing; the sequence is DKVLECPVSI.

Belongs to the Ca(2+):cation antiporter (CaCA) (TC 2.A.19) family. SLC24A subfamily. In terms of tissue distribution, expressed abundantly in all regions of the brain and weakly in the eye, large intestine and adrenal tissue.

It is found in the cell membrane. The enzyme catalyses Ca(2+)(out) + K(+)(out) + 4 Na(+)(in) = Ca(2+)(in) + K(+)(in) + 4 Na(+)(out). Its function is as follows. Calcium, potassium:sodium antiporter that transports 1 Ca(2+) and 1 K(+) in exchange for 4 Na(+). Required for learming and memory by regulating neuronal Ca(2+), which is essential for the development of synaptic plasticity. The protein is Sodium/potassium/calcium exchanger 2 (Slc24a2) of Rattus norvegicus (Rat).